An 85-amino-acid polypeptide reads, in one-letter code: Toxin BmKaIT1 (85 aa).

The signal sequence occupies residues 1–19 (MNYLVMISFAFLLMTGVES). The LCN-type CS-alpha/beta domain occupies 21–83 (RDAYIAQNYN…VPIRVPGKCH (63 aa)). Cystine bridges form between C31/C82, C35/C55, C41/C65, and C45/C67. Positions 84-85 (RR) are cleaved as a propeptide — removed by a carboxypeptidase.

It belongs to the long (4 C-C) scorpion toxin superfamily. Sodium channel inhibitor family. Alpha subfamily. In terms of tissue distribution, expressed by the venom gland.

The protein resides in the secreted. Functionally, alpha toxins bind voltage-independently at site-3 of sodium channels (Nav) and inhibit the inactivation of the activated channels, thereby blocking neuronal transmission. Shows a high toxicity toward insects and moderate toxicity against mammals. The sequence is that of Toxin BmKaIT1 from Olivierus martensii (Manchurian scorpion).